Consider the following 131-residue polypeptide: Large ribosomal subunit protein bL17 (131 aa).

It belongs to the bacterial ribosomal protein bL17 family. In terms of assembly, part of the 50S ribosomal subunit. Contacts protein L32.

In Burkholderia ambifaria (strain MC40-6), this protein is Large ribosomal subunit protein bL17.